A 742-amino-acid chain; its full sequence is 2'-5'-oligoadenylate synthase 2 (742 aa).

A disordered region spans residues 1-35; it reads MGNWLTGNWSSDRSSGYSSGWSPGGSSGVPSGPVH. A lipid anchor (N-myristoyl glycine) is attached at Gly2. Positions 10 to 21 are enriched in low complexity; that stretch reads SSDRSSGYSSGW. OAS domain regions lie at residues 60–374 and 382–721; these read VPSQ…YWDV and TPSH…WKVP. Lys417 carries the post-translational modification N6-acetyllysine. Ser436 lines the ATP pocket. Residues Asp448, Asp450, and Asp519 each contribute to the Mg(2+) site. Residues Arg582 and Lys585 each coordinate ATP.

This sequence belongs to the 2-5A synthase family. Homodimer. Requires Mg(2+) as cofactor. In terms of processing, myristoylation is not essential for its activity. Post-translationally, glycosylated. Glycosylation is essential for its activity. In terms of tissue distribution, expressed in the uterus. Expressed in mammary glands: expressed at low level before the establishment of lactation, then expression strongly increases, and subsequently decreases during early involution.

The protein localises to the cytoplasm. Its subcellular location is the perinuclear region. The catalysed reaction is 3 ATP = 5'-triphosphoadenylyl-(2'-&gt;5')-adenylyl-(2'-&gt;5')-adenosine + 2 diphosphate. Its activity is regulated as follows. Produced as a latent enzyme which is activated by double stranded RNA (dsRNA) generated during the course of viral infection. The dsRNA activator must be at least 15 nucleotides long, and no modification of the 2'-hydroxyl group is tolerated. ssRNA or dsDNA do not act as activators. Strongly inhibited by copper, iron and zinc ions. Partially inhibited by cobalt and nickel ions. In terms of biological role, interferon-induced, dsRNA-activated antiviral enzyme which plays a critical role in cellular innate antiviral response. Activated by detection of double stranded RNA (dsRNA): polymerizes higher oligomers of 2'-5'-oligoadenylates (2-5A) from ATP which then bind to the inactive monomeric form of ribonuclease L (RNASEL) leading to its dimerization and subsequent activation. Activation of RNASEL leads to degradation of cellular as well as viral RNA, resulting in the inhibition of protein synthesis, thus terminating viral replication. Can mediate the antiviral effect via the classical RNASEL-dependent pathway or an alternative antiviral pathway independent of RNASEL. In addition, it may also play a role in other cellular processes such as apoptosis, cell growth, differentiation and gene regulation. May act as a negative regulator of lactation, stopping lactation in virally infected mammary gland lobules, thereby preventing transmission of viruses to neonates. Non-infected lobules would not be affected, allowing efficient pup feeding during infection. In Mus musculus (Mouse), this protein is 2'-5'-oligoadenylate synthase 2.